A 252-amino-acid polypeptide reads, in one-letter code: Hydroxyacylglutathione hydrolase (252 aa).

Positions 54, 56, 58, 59, 111, 128, and 166 each coordinate Zn(2+).

This sequence belongs to the metallo-beta-lactamase superfamily. Glyoxalase II family. In terms of assembly, monomer. Requires Zn(2+) as cofactor.

The catalysed reaction is an S-(2-hydroxyacyl)glutathione + H2O = a 2-hydroxy carboxylate + glutathione + H(+). It functions in the pathway secondary metabolite metabolism; methylglyoxal degradation; (R)-lactate from methylglyoxal: step 2/2. In terms of biological role, thiolesterase that catalyzes the hydrolysis of S-D-lactoyl-glutathione to form glutathione and D-lactic acid. This chain is Hydroxyacylglutathione hydrolase, found in Aliivibrio fischeri (strain ATCC 700601 / ES114) (Vibrio fischeri).